We begin with the raw amino-acid sequence, 320 residues long: Eukaryotic translation initiation factor 3 subunit G (320 aa).

The interval 1-60 is disordered; that stretch reads MPTGDFDSKPSWADQVEEEGEDDKCVTSELLKGIPLPTGDTSPEPELLPGDPLPPPKEVI. Phosphoserine occurs at positions 8 and 11. Residues threonine 38 and threonine 41 each carry the phosphothreonine modification. Phosphoserine is present on residues serine 42, serine 189, serine 223, and serine 264. Positions 205 to 233 are disordered; it reads AAQNKTGKYVPPSLRDGASRRGESMQPNR. The segment covering 221 to 233 has biased composition (basic and acidic residues); sequence GASRRGESMQPNR. The RRM domain occupies 239-317; it reads ATIRVTNLSE…LILNVEWAKP (79 aa).

The protein belongs to the eIF-3 subunit G family. Component of the eukaryotic translation initiation factor 3 (eIF-3) complex, which is composed of 13 subunits: EIF3A, EIF3B, EIF3C, EIF3D, EIF3E, EIF3F, EIF3G, EIF3H, EIF3I, EIF3J, EIF3K, EIF3L and EIF3M. The eIF-3 complex appears to include 3 stable modules: module A is composed of EIF3A, EIF3B, EIF3G and EIF3I; module B is composed of EIF3F, EIF3H, and EIF3M; and module C is composed of EIF3C, EIF3D, EIF3E, EIF3K and EIF3L. EIF3C of module C binds EIF3B of module A and EIF3H of module B, thereby linking the three modules. EIF3J is a labile subunit that binds to the eIF-3 complex via EIF3B. The eIF-3 complex interacts with RPS6KB1 under conditions of nutrient depletion. Mitogenic stimulation leads to binding and activation of a complex composed of MTOR and RPTOR, leading to phosphorylation and release of RPS6KB1 and binding of EIF4B to eIF-3. Interacts (via C-terminus) with AIFM1 (via N-terminus). Interacts with DHX33; the interaction is independent of RNA. Phosphorylated. Phosphorylation is enhanced upon serum stimulation.

It is found in the cytoplasm. The protein resides in the nucleus. Its subcellular location is the perinuclear region. Its function is as follows. RNA-binding component of the eukaryotic translation initiation factor 3 (eIF-3) complex, which is required for several steps in the initiation of protein synthesis. The eIF-3 complex associates with the 40S ribosome and facilitates the recruitment of eIF-1, eIF-1A, eIF-2:GTP:methionyl-tRNAi and eIF-5 to form the 43S pre-initiation complex (43S PIC). The eIF-3 complex stimulates mRNA recruitment to the 43S PIC and scanning of the mRNA for AUG recognition. The eIF-3 complex is also required for disassembly and recycling of post-termination ribosomal complexes and subsequently prevents premature joining of the 40S and 60S ribosomal subunits prior to initiation. The eIF-3 complex specifically targets and initiates translation of a subset of mRNAs involved in cell proliferation, including cell cycling, differentiation and apoptosis, and uses different modes of RNA stem-loop binding to exert either translational activation or repression. This subunit can bind 18S rRNA. The protein is Eukaryotic translation initiation factor 3 subunit G (Eif3g) of Rattus norvegicus (Rat).